Reading from the N-terminus, the 492-residue chain is Trigger factor (492 aa).

The segment at 77–96 (EILSSRGEKSATQPAISMTE) is disordered. The region spanning 169–254 (GDRVTMNYLG…VKEVAAAAAV (86 aa)) is the PPIase FKBP-type domain. The interval 439–492 (ELLADDGEEETETKKKAPAKKKAAAKADDAAEGEEAAPKKKAPAKKKATEADAE) is disordered.

The protein belongs to the FKBP-type PPIase family. Tig subfamily.

Its subcellular location is the cytoplasm. It carries out the reaction [protein]-peptidylproline (omega=180) = [protein]-peptidylproline (omega=0). Involved in protein export. Acts as a chaperone by maintaining the newly synthesized protein in an open conformation. Functions as a peptidyl-prolyl cis-trans isomerase. In Agrobacterium fabrum (strain C58 / ATCC 33970) (Agrobacterium tumefaciens (strain C58)), this protein is Trigger factor.